The chain runs to 486 residues: Cytosol aminopeptidase (486 aa).

Lysine 249 and aspartate 254 together coordinate Zn(2+). Residue lysine 261 is part of the active site. 3 residues coordinate Zn(2+): aspartate 272, aspartate 331, and glutamate 333. Residue arginine 335 is part of the active site.

It belongs to the peptidase M17 family. Homohexamer. It depends on Zn(2+) as a cofactor.

Its subcellular location is the cytoplasm. It catalyses the reaction Release of an N-terminal amino acid, Xaa-|-Yaa-, in which Xaa is preferably Leu, but may be other amino acids including Pro although not Arg or Lys, and Yaa may be Pro. Amino acid amides and methyl esters are also readily hydrolyzed, but rates on arylamides are exceedingly low.. The catalysed reaction is Release of N-terminal proline from a peptide.. Presumably involved in the processing and regular turnover of intracellular proteins. Catalyzes the removal of unsubstituted N-terminal amino acids from various peptides. The protein is Cytosol aminopeptidase of Encephalitozoon cuniculi (strain GB-M1) (Microsporidian parasite).